Reading from the N-terminus, the 176-residue chain is ATP synthase subunit delta (176 aa).

Belongs to the ATPase delta chain family. In terms of assembly, F-type ATPases have 2 components, F(1) - the catalytic core - and F(0) - the membrane proton channel. F(1) has five subunits: alpha(3), beta(3), gamma(1), delta(1), epsilon(1). F(0) has three main subunits: a(1), b(2) and c(10-14). The alpha and beta chains form an alternating ring which encloses part of the gamma chain. F(1) is attached to F(0) by a central stalk formed by the gamma and epsilon chains, while a peripheral stalk is formed by the delta and b chains.

The protein localises to the cell inner membrane. Functionally, f(1)F(0) ATP synthase produces ATP from ADP in the presence of a proton or sodium gradient. F-type ATPases consist of two structural domains, F(1) containing the extramembraneous catalytic core and F(0) containing the membrane proton channel, linked together by a central stalk and a peripheral stalk. During catalysis, ATP synthesis in the catalytic domain of F(1) is coupled via a rotary mechanism of the central stalk subunits to proton translocation. In terms of biological role, this protein is part of the stalk that links CF(0) to CF(1). It either transmits conformational changes from CF(0) to CF(1) or is implicated in proton conduction. The sequence is that of ATP synthase subunit delta from Campylobacter curvus (strain 525.92).